Reading from the N-terminus, the 2005-residue chain is Sodium channel protein type 2 subunit alpha (2005 aa).

At 1–129 the chain is on the cytoplasmic side; sequence MAQSVLVPPG…KLAIKILVHS (129 aa). Ser-4 carries the phosphoserine modification. The interval 28–61 is disordered; sequence RIAEEKAKRPKQERKDEDDENGPKPNSDLEAGKS. Residue Lys-38 forms a Glycyl lysine isopeptide (Lys-Gly) (interchain with G-Cter in SUMO1) linkage. One copy of the I repeat lies at 111-456; that stretch reads ILTPFNPIRK…QQMLEQLKKQ (346 aa). Residues 130 to 148 traverse the membrane as a helical segment; that stretch reads LFNMLIMCTILTNCVFMTM. Residues 149–155 lie on the Extracellular side of the membrane; that stretch reads SNPPDWT. A helical transmembrane segment spans residues 156-176; it reads KNVEYTFTGIYTFESLIKILA. Residues 177 to 190 lie on the Cytoplasmic side of the membrane; it reads RGFCLEDFTFLRDP. Residues 191 to 208 form a helical membrane-spanning segment; it reads WNWLDFTVITFAYVTEFV. Over 209-214 the chain is Extracellular; it reads DLGNVS. Asn-212 carries an N-linked (GlcNAc...) asparagine glycan. The chain crosses the membrane as a helical span at residues 215–231; sequence ALRTFRVLRALKTISVI. Over 232–250 the chain is Cytoplasmic; that stretch reads PGLKTIVGALIQSVKKLSD. Residues 251 to 270 form a helical membrane-spanning segment; it reads VMILTVFCLSVFALIGLQLF. Topologically, residues 271-369 are extracellular; the sequence is MGNLRNKCLQ…PNYGYTSFDT (99 aa). Cys-278 and Cys-338 are joined by a disulfide. 6 N-linked (GlcNAc...) asparagine glycosylation sites follow: Asn-285, Asn-291, Asn-297, Asn-303, Asn-308, and Asn-340. An intramembrane region (pore-forming) is located at residues 370 to 394; it reads FSWAFLSLFRLMTQDFWENLYQLTL. The Extracellular segment spans residues 395–401; it reads RAAGKTY. A helical transmembrane segment spans residues 402–422; sequence MIFFVLVIFLGSFYLINLILA. Residues 423–759 lie on the Cytoplasmic side of the membrane; sequence VVAMAYEEQN…HLVNLVVMDP (337 aa). A phosphoserine mark is found at Ser-468, Ser-471, Ser-484, Ser-526, Ser-528, Ser-531, Ser-553, Ser-554, Ser-558, Ser-573, Ser-576, Ser-589, Ser-610, Ser-623, Ser-686, Ser-687, and Ser-721. Positions 494–529 are disordered; the sequence is SSKSEKELKNRRKKKKQKEQSGEEEKNDRVRKSESE. Positions 511-529 are enriched in basic and acidic residues; sequence KEQSGEEEKNDRVRKSESE. The segment at 590–610 is disordered; that stretch reads ENDFADDEHSTFEDNDSRRDS. The segment covering 596 to 610 has biased composition (basic and acidic residues); sequence DEHSTFEDNDSRRDS. One copy of the II repeat lies at 741–1013; the sequence is CCKPWLKVKH…QIAVGRMQKG (273 aa). Residues 760-778 traverse the membrane as a helical segment; the sequence is FVDLAITICIVLNTLFMAM. At 779 to 789 the chain is on the extracellular side; sequence EHYPMTEQFSS. The chain crosses the membrane as a helical span at residues 790–809; the sequence is VLSVGNLVFTGIFTAEMFLK. Topologically, residues 810–823 are cytoplasmic; sequence IIAMDPYYYFQEGW. A helical transmembrane segment spans residues 824–843; it reads NIFDGFIVSLSLMELGLANV. Residues 844-845 are Extracellular-facing; that stretch reads EG. Residues 846-863 traverse the membrane as a helical segment; it reads LSVLRSFRLLRVFKLAKS. The Cytoplasmic portion of the chain corresponds to 864–879; that stretch reads WPTLNMLIKIIGNSVG. A helical membrane pass occupies residues 880–898; sequence ALGNLTLVLAIIVFIFAVV. Over 899-927 the chain is Extracellular; the sequence is GMQLFGKSYKECVCKISNDCELPRWHMHD. Cys-912 and Cys-918 are disulfide-bonded. A binds SCN2B region spans residues 917–918; sequence DC. An intramembrane region (pore-forming) is located at residues 928-948; the sequence is FFHSFLIVFRVLCGEWIETMW. The Extracellular segment spans residues 949-961; it reads DCMEVAGQTMCLT. Cys-950 and Cys-959 are oxidised to a cystine. A helical transmembrane segment spans residues 962–982; the sequence is VFMMVMVIGNLVVLNLFLALL. Residues 983 to 1209 lie on the Cytoplasmic side of the membrane; sequence LSSFSSDNLA…TCYKIVEHNW (227 aa). The disordered stretch occupies residues 1120 to 1165; it reads EEFSSESDMEESKEKLNATSSSEGSTVDIGAPAEGEQPEVEPEESL. The span at 1155 to 1165 shows a compositional bias: acidic residues; that stretch reads EQPEVEPEESL. One copy of the III repeat lies at 1190 to 1504; it reads KGKLWWNLRK…KKYYNAMKKL (315 aa). Residues 1210–1227 traverse the membrane as a helical segment; it reads FETFIVFMILLSSGALAF. At 1228 to 1240 the chain is on the extracellular side; that stretch reads EDIYIEQRKTIKT. Residues 1241–1259 form a helical membrane-spanning segment; the sequence is MLEYADKVFTYIFILEMLL. Residues 1260-1273 are Cytoplasmic-facing; that stretch reads KWVAYGFQVYFTNA. The chain crosses the membrane as a helical span at residues 1274–1292; the sequence is WCWLDFLIVDVSLVSLTAN. The Extracellular portion of the chain corresponds to 1293–1300; that stretch reads ALGYSELG. A helical membrane pass occupies residues 1301-1319; it reads AIKSLRTLRALRPLRALSR. Over 1320–1336 the chain is Cytoplasmic; the sequence is FEGMRVVVNALLGAIPS. Residues 1337-1356 traverse the membrane as a helical segment; that stretch reads IMNVLLVCLIFWLIFSIMGV. The Extracellular segment spans residues 1357 to 1408; it reads NLFAGKFYHCINYTTGEMFDVSVVNNYSECKALIESNQTARWKNVKVNFDNV. Cys-1366 and Cys-1386 are joined by a disulfide. Residues Asn-1368, Asn-1382, and Asn-1393 are each glycosylated (N-linked (GlcNAc...) asparagine). An intramembrane region (pore-forming) is located at residues 1409 to 1430; it reads GLGYLSLLQVATFKGWMDIMYA. Residues 1431–1447 are Extracellular-facing; it reads AVDSRNVELQPKYEDNL. Residues 1448–1469 form a helical membrane-spanning segment; it reads YMYLYFVIFIIFGSFFTLNLFI. The Cytoplasmic segment spans residues 1470–1532; sequence GVIIDNFNQQ…MVFDFVTKQV (63 aa). Ser-1506 is modified (phosphoserine; by PKC). An IV repeat occupies 1513–1811; that stretch reads IPRPANKFQG…WEKFDPDATQ (299 aa). Residues 1533–1550 form a helical membrane-spanning segment; the sequence is FDISIMILICLNMVTMMV. The Extracellular portion of the chain corresponds to 1551–1561; that stretch reads ETDDQSQEMTN. A helical transmembrane segment spans residues 1562 to 1580; the sequence is ILYWINLVFIVLFTGECVL. Over 1581–1592 the chain is Cytoplasmic; the sequence is KLISLRYYYFTI. A helical membrane pass occupies residues 1593 to 1610; the sequence is GWNIFDFVVVILSIVGMF. The Extracellular portion of the chain corresponds to 1611–1623; that stretch reads LAELIEKYFVSPT. Residues 1624–1640 traverse the membrane as a helical segment; that stretch reads LFRVIRLARIGRILRLI. Over 1641–1659 the chain is Cytoplasmic; that stretch reads KGAKGIRTLLFALMMSLPA. Residues 1660 to 1677 form a helical membrane-spanning segment; it reads LFNIGLLLFLVMFIYAIF. At 1678–1699 the chain is on the extracellular side; the sequence is GMSNFAYVKREVGIDDMFNFET. An intramembrane region (pore-forming) is located at residues 1700–1722; that stretch reads FGNSMICLFQITTSAGWDGLLAP. The Extracellular segment spans residues 1723-1752; that stretch reads ILNSGPPDCDPDKDHPGSSVKGDCGNPSVG. Cys-1731 and Cys-1746 form a disulfide bridge. A helical membrane pass occupies residues 1753-1775; the sequence is IFFFVSYIIISFLVVVNMYIAVI. At 1776–2005 the chain is on the cytoplasmic side; that stretch reads LENFSVATEE…KGKDIRESKK (230 aa). In terms of domain architecture, IQ spans 1905-1934; that stretch reads EEVSAIIIQRAYRRYLLKQKVKKVSSIYKK. Residue Ser-1930 is modified to Phosphoserine. Basic and acidic residues predominate over residues 1935 to 1964; the sequence is DKGKECDGTPIKEDTLIDKLNENSTPEKTD. Positions 1935–2005 are disordered; that stretch reads DKGKECDGTP…KGKDIRESKK (71 aa). A phosphothreonine mark is found at Thr-1943, Thr-1963, and Thr-1966. Ser-1971 bears the Phosphoserine mark. Basic and acidic residues predominate over residues 1979–2005; it reads TKPEKEKFEKDKSEKEDKGKDIRESKK.

The protein belongs to the sodium channel (TC 1.A.1.10) family. Nav1.2/SCN2A subfamily. Heterooligomer of a large alpha subunit and a smaller beta subunit. Heterooligomer with SCN2B or SCN4B; disulfide-linked. Heterooligomer with SCN1B or SCN3B; non-covalently linked. Interacts with NEDD4L. Interacts with CALM. Interacts with TMEM233. Interacts with the conotoxin GVIIJ. Interacts with the spider beta/delta-theraphotoxin-Pre1a. Interacts with the conotoxin KIIIA. Interacts with the spider protoxin-II. In terms of processing, may be ubiquitinated by NEDD4L; which would promote its endocytosis. Phosphorylation at Ser-1506 by PKC in a highly conserved cytoplasmic loop slows inactivation of the sodium channel and reduces peak sodium currents. Post-translationally, sumoylated at Lys-38. Sumoylation is induced by hypoxia, increases voltage-gated sodium current and mediates the early response to acute hypoxia in neurons. Sumoylated SCN2A is located at the cell membrane.

The protein localises to the cell membrane. The enzyme catalyses Na(+)(in) = Na(+)(out). Functionally, mediates the voltage-dependent sodium ion permeability of excitable membranes. Assuming opened or closed conformations in response to the voltage difference across the membrane, the protein forms a sodium-selective channel through which Na(+) ions may pass in accordance with their electrochemical gradient. Implicated in the regulation of hippocampal replay occurring within sharp wave ripples (SPW-R) important for memory. This Homo sapiens (Human) protein is Sodium channel protein type 2 subunit alpha.